We begin with the raw amino-acid sequence, 324 residues long: Beta-ketoacyl-[acyl-carrier-protein] synthase III (324 aa).

Catalysis depends on residues Cys-114 and His-246. An ACP-binding region spans residues Gln-247–Arg-251. Residue Asn-276 is part of the active site.

It belongs to the thiolase-like superfamily. FabH family. In terms of assembly, homodimer.

Its subcellular location is the cytoplasm. The catalysed reaction is malonyl-[ACP] + acetyl-CoA + H(+) = 3-oxobutanoyl-[ACP] + CO2 + CoA. The protein operates within lipid metabolism; fatty acid biosynthesis. Catalyzes the condensation reaction of fatty acid synthesis by the addition to an acyl acceptor of two carbons from malonyl-ACP. Catalyzes the first condensation reaction which initiates fatty acid synthesis and may therefore play a role in governing the total rate of fatty acid production. Possesses both acetoacetyl-ACP synthase and acetyl transacylase activities. Its substrate specificity determines the biosynthesis of branched-chain and/or straight-chain of fatty acids. The sequence is that of Beta-ketoacyl-[acyl-carrier-protein] synthase III from Campylobacter jejuni subsp. jejuni serotype O:2 (strain ATCC 700819 / NCTC 11168).